A 137-amino-acid polypeptide reads, in one-letter code: Large ribosomal subunit protein bL17 (137 aa).

This sequence belongs to the bacterial ribosomal protein bL17 family. In terms of assembly, part of the 50S ribosomal subunit. Contacts protein L32.

The sequence is that of Large ribosomal subunit protein bL17 from Caulobacter vibrioides (strain ATCC 19089 / CIP 103742 / CB 15) (Caulobacter crescentus).